We begin with the raw amino-acid sequence, 130 residues long: MKFRKGRPKIPRLISEEPQFKLFKPAGTPGIELESEVLSFEELESLRLVDYLNQPHEEAADAMGISRRVFWNILKSARKKVADALINGKMIDIGGGYYKIRECNYEDECQRGRNCRYGVSNCLTLKKDSE.

The protein belongs to the UPF0251 family.

The protein is UPF0251 protein MmarC5_0986 of Methanococcus maripaludis (strain C5 / ATCC BAA-1333).